The sequence spans 297 residues: Phosphate import ATP-binding protein PstB (297 aa).

Residues 50-292 (MRLRDVEVFY…PEHDLTEAYI (243 aa)) form the ABC transporter domain. 82-89 (GPSGCGKS) provides a ligand contact to ATP.

The protein belongs to the ABC transporter superfamily. Phosphate importer (TC 3.A.1.7) family. The complex is composed of two ATP-binding proteins (PstB), two transmembrane proteins (PstC and PstA) and a solute-binding protein (PstS).

Its subcellular location is the cell inner membrane. It catalyses the reaction phosphate(out) + ATP + H2O = ADP + 2 phosphate(in) + H(+). Its function is as follows. Part of the ABC transporter complex PstSACB involved in phosphate import. Responsible for energy coupling to the transport system. The chain is Phosphate import ATP-binding protein PstB from Alcanivorax borkumensis (strain ATCC 700651 / DSM 11573 / NCIMB 13689 / SK2).